The primary structure comprises 236 residues: MAELDAQTIINYISNAPKKTPVKVYLKGNLGDLEFPAEVETFLEQHTGVIFGDWTVIEPLLKEYSSAIESYHVENDARNSAVPLLDLKNINARIEPGAIIRDKVLIGDNAVIMMGATINIGAEIGADSMIDMGAVLGGRAIVGRHCHIGAGTVLAGVVEPASAEPVRIDDNVMVGANAVVIEGVHVGEGAVIAAGAIVTHDVAPHTMVAGVPAKFIKNVDDQTAGKTELEDDLRKL.

It belongs to the transferase hexapeptide repeat family. DapH subfamily.

The enzyme catalyses (S)-2,3,4,5-tetrahydrodipicolinate + acetyl-CoA + H2O = L-2-acetamido-6-oxoheptanedioate + CoA. Its pathway is amino-acid biosynthesis; L-lysine biosynthesis via DAP pathway; LL-2,6-diaminopimelate from (S)-tetrahydrodipicolinate (acetylase route): step 1/3. Catalyzes the transfer of an acetyl group from acetyl-CoA to tetrahydrodipicolinate. The polypeptide is 2,3,4,5-tetrahydropyridine-2,6-dicarboxylate N-acetyltransferase (Limosilactobacillus reuteri (strain DSM 20016) (Lactobacillus reuteri)).